A 386-amino-acid chain; its full sequence is GTPase Obg (386 aa).

Residues Ser-4 to Leu-162 form the Obg domain. The interval Lys-18 to Arg-44 is disordered. An OBG-type G domain is found at Ala-163–Asn-329. Residues Gly-169–Ser-176, Phe-194–Glu-198, Asp-216–Gly-219, Thr-283–Asp-286, and Ser-310–Ile-312 each bind GTP. Positions 176 and 196 each coordinate Mg(2+). The disordered stretch occupies residues Tyr-357–Lys-386.

It belongs to the TRAFAC class OBG-HflX-like GTPase superfamily. OBG GTPase family. Monomer. Mg(2+) serves as cofactor.

It is found in the cytoplasm. An essential GTPase which binds GTP, GDP and possibly (p)ppGpp with moderate affinity, with high nucleotide exchange rates and a fairly low GTP hydrolysis rate. Plays a role in control of the cell cycle, stress response, ribosome biogenesis and in those bacteria that undergo differentiation, in morphogenesis control. This is GTPase Obg from Parabacteroides distasonis (strain ATCC 8503 / DSM 20701 / CIP 104284 / JCM 5825 / NCTC 11152).